Reading from the N-terminus, the 556-residue chain is Mitochondrial distribution and morphology protein 34-2 (556 aa).

The region spanning 1-195 is the SMP-LTD domain; it reads MAFNFNWSPL…LPAIIHRLSL (195 aa). Disordered stretches follow at residues 206-239, 299-423, and 440-473; these read EEMNDETDNTAKSSEGPGQDPLASPPQDPVDSLG, TDTS…PVTP, and HLPSFSRPTRRDADLSYSHETIRGPKAEDVDATP. Polar residues predominate over residues 299 to 333; that stretch reads TDTSEFPSSVISPLSPTLSREQSQMGSMSSLHETA. A compositionally biased stretch (low complexity) spans 334-357; it reads SNASMQSRPSMSSHSFSTSTYGLS. Over residues 362 to 374 the composition is skewed to basic residues; the sequence is RHSKAHARKRKKR. Residues 375–385 show a composition bias toward basic and acidic residues; the sequence is VVDLRRPKTTD. The span at 391–402 shows a compositional bias: polar residues; sequence SDESVMTESSRP. The segment covering 459–468 has biased composition (basic and acidic residues); sequence ETIRGPKAED.

It belongs to the MDM34 family. As to quaternary structure, component of the ER-mitochondria encounter structure (ERMES) or MDM complex, composed of mmm1, mdm10, mdm12 and mdm34.

It is found in the mitochondrion outer membrane. In terms of biological role, component of the ERMES/MDM complex, which serves as a molecular tether to connect the endoplasmic reticulum (ER) and mitochondria. Components of this complex are involved in the control of mitochondrial shape and protein biogenesis, and function in nonvesicular lipid trafficking between the ER and mitochondria. Mdm34 is required for the interaction of the ER-resident membrane protein mmm1 and the outer mitochondrial membrane-resident beta-barrel protein mdm10. This chain is Mitochondrial distribution and morphology protein 34-2, found in Penicillium rubens (strain ATCC 28089 / DSM 1075 / NRRL 1951 / Wisconsin 54-1255) (Penicillium chrysogenum).